Consider the following 551-residue polypeptide: Glucans biosynthesis protein D (551 aa).

Positions 1–32 form a signal peptide, tat-type signal; the sequence is MDRRRFIKGSMAMAAVCGTSGIASLFSQAAFA.

Belongs to the OpgD/OpgG family. Post-translationally, predicted to be exported by the Tat system. The position of the signal peptide cleavage has not been experimentally proven.

The protein localises to the periplasm. It functions in the pathway glycan metabolism; osmoregulated periplasmic glucan (OPG) biosynthesis. Functionally, probably involved in the control of the structural glucose backbone of osmoregulated periplasmic glucans (OPGs). The chain is Glucans biosynthesis protein D from Escherichia coli O1:K1 / APEC.